We begin with the raw amino-acid sequence, 323 residues long: Ribonuclease Z (323 aa).

H62, H64, D66, H67, H144, D215, and H273 together coordinate Zn(2+). Residue D66 is the Proton acceptor of the active site.

This sequence belongs to the RNase Z family. In terms of assembly, homodimer. Zn(2+) is required as a cofactor.

It catalyses the reaction Endonucleolytic cleavage of RNA, removing extra 3' nucleotides from tRNA precursor, generating 3' termini of tRNAs. A 3'-hydroxy group is left at the tRNA terminus and a 5'-phosphoryl group is left at the trailer molecule.. In terms of biological role, zinc phosphodiesterase, which displays some tRNA 3'-processing endonuclease activity. Probably involved in tRNA maturation, by removing a 3'-trailer from precursor tRNA. This is Ribonuclease Z from Synechococcus sp. (strain WH7803).